Reading from the N-terminus, the 392-residue chain is Type III polyketide synthase B (392 aa).

Residue K57–T64 coordinates CoA. The Nucleophile role is filled by C166. G218–D219 provides a ligand contact to substrate. CoA-binding positions include L269, G309 to A312, and A312.

It belongs to the thiolase-like superfamily. Chalcone/stilbene synthases family. As to quaternary structure, homodimer. Interacts with 4CLL1/ACOS5 and TKPR1. Expressed in flowers and flower buds (at protein level). Mostly confined to anther tapetal cells.

The protein resides in the endoplasmic reticulum. The protein operates within secondary metabolite biosynthesis; flavonoid biosynthesis. Functionally, plant type III polyketide synthases (PKSs) that catalyzes the condensation of malonyl-CoA units with various CoA ester starter molecules to generate a diverse array of natural products including long-chain alkyl alpha-pyrones. Accepts up to C(20) chain-length fatty acyl CoAs as starter substrates, and carries out sequential condensations with malonyl-CoA to produce triketide and tetraketide alpha-pyrones, potential sporopollenin precursors. Favorite substrates for are midchain- and v-hydroxylated fatty acyl-CoAs (e.g. 12-hydroxyoctadecanoyl-CoA and 16-hydroxyhexadecanoyl-CoA). Required for pollen development and sporopollenin biosynthesis, the major constituent of exine in the outer pollen wall. In vitro, can use 4-coumaroyl-coenzyme A as substrate to produce bis-noryangonin and fatty acyl-coenzyme A as substrate to produce medium-chain alkyl pyrones. May play a role in both the synthesis of pollen fatty acids and phenolics found in exine. This Arabidopsis thaliana (Mouse-ear cress) protein is Type III polyketide synthase B.